Reading from the N-terminus, the 514-residue chain is Protein translocase subunit SecD (514 aa).

5 helical membrane-spanning segments follow: residues 7-27, 357-377, 389-409, 448-470, and 482-502; these read WKIF…LPNF, IIGF…LGLF, VLAL…AGII, FATI…IFGV, and IGII…IDIW.

Belongs to the SecD/SecF family. SecD subfamily. In terms of assembly, forms a complex with SecF. Part of the essential Sec protein translocation apparatus which comprises SecA, SecYEG and auxiliary proteins SecDF-YajC and YidC.

It is found in the cell inner membrane. Its function is as follows. Part of the Sec protein translocase complex. Interacts with the SecYEG preprotein conducting channel. SecDF uses the proton motive force (PMF) to complete protein translocation after the ATP-dependent function of SecA. This Rickettsia bellii (strain RML369-C) protein is Protein translocase subunit SecD.